Here is a 477-residue protein sequence, read N- to C-terminus: Ketoisovalerate oxidoreductase subunit VorA (477 aa).

As to quaternary structure, heterotrimer of the VorA, VorB and VorC subunits.

The catalysed reaction is 3-methyl-2-oxobutanoate + 2 oxidized [2Fe-2S]-[ferredoxin] + CoA = 2-methylpropanoyl-CoA + 2 reduced [2Fe-2S]-[ferredoxin] + CO2 + H(+). This chain is Ketoisovalerate oxidoreductase subunit VorA (vorA), found in Methanothermobacter thermautotrophicus (strain ATCC 29096 / DSM 1053 / JCM 10044 / NBRC 100330 / Delta H) (Methanobacterium thermoautotrophicum).